A 163-amino-acid chain; its full sequence is Small ribosomal subunit protein uS5 (163 aa).

Residues leucine 8 to valine 71 enclose the S5 DRBM domain.

Belongs to the universal ribosomal protein uS5 family. In terms of assembly, part of the 30S ribosomal subunit. Contacts proteins S4 and S8.

Functionally, with S4 and S12 plays an important role in translational accuracy. In terms of biological role, located at the back of the 30S subunit body where it stabilizes the conformation of the head with respect to the body. The polypeptide is Small ribosomal subunit protein uS5 (Maridesulfovibrio salexigens (strain ATCC 14822 / DSM 2638 / NCIMB 8403 / VKM B-1763) (Desulfovibrio salexigens)).